We begin with the raw amino-acid sequence, 364 residues long: Fructose-bisphosphate aldolase C (364 aa).

Tyr-5 bears the Phosphotyrosine mark. A phosphoserine mark is found at Ser-36, Ser-39, and Ser-45. Arg-56 is a binding site for substrate. An N6-acetyllysine modification is found at Lys-111. A Phosphoserine modification is found at Ser-132. Lys-147 contacts substrate. The active-site Proton acceptor is Glu-188. Lys-230 serves as the catalytic Schiff-base intermediate with dihydroxyacetone-P.

It belongs to the class I fructose-bisphosphate aldolase family. As to quaternary structure, homotetramer. Interacts with ATP6V1E1.

It catalyses the reaction beta-D-fructose 1,6-bisphosphate = D-glyceraldehyde 3-phosphate + dihydroxyacetone phosphate. It participates in carbohydrate degradation; glycolysis; D-glyceraldehyde 3-phosphate and glycerone phosphate from D-glucose: step 4/4. This Pan troglodytes (Chimpanzee) protein is Fructose-bisphosphate aldolase C (ALDOC).